The sequence spans 71 residues: Protein CYSTEINE-RICH TRANSMEMBRANE MODULE 4 (71 aa).

The segment covering 1–12 (MSQYSQNQSSGA) has biased composition (polar residues). The disordered stretch occupies residues 1 to 31 (MSQYSQNQSSGAYPTPPVSTGPYMTPPPLGY). Pro residues predominate over residues 14-30 (PTPPVSTGPYMTPPPLG). A helical membrane pass occupies residues 48–64 (SKGDGFLKGCLAAMCCC).

This sequence belongs to the CYSTM1 family. As to quaternary structure, heterodimers. Interacts with CYSTM6, CYSTM7, CYSTM12 and WIH1/CYSTM13. As to expression, mostly expressed in roots, stems, rosette leaves and siliques and, to a lower extent, in flowers and cauline leaves.

The protein localises to the cell membrane. It localises to the cytoplasm. Involved in resistance to abiotic stress. The polypeptide is Protein CYSTEINE-RICH TRANSMEMBRANE MODULE 4 (Arabidopsis thaliana (Mouse-ear cress)).